We begin with the raw amino-acid sequence, 297 residues long: Thiosulfate sulfurtransferase (297 aa).

Lys14 is subject to N6-acetyllysine; alternate. Lys14 bears the N6-succinyllysine; alternate mark. In terms of domain architecture, Rhodanese 1 spans 25-143; sequence VGPSLRVLDA…WLKEGHPVTS (119 aa). Ser35 carries O-linked (GlcNAc) serine glycosylation. Position 38 is a phosphoserine (Ser38). An N6-acetyllysine; alternate modification is found at Lys136. Lys136 carries the N6-succinyllysine; alternate modification. The tract at residues 144-159 is hinge; that stretch reads EPSRPEPAVFKATLNR. Lys163 carries the N6-acetyllysine modification. Residues 173 to 288 form the Rhodanese 2 domain; it reads QSKRFQLVDS…WFRRAPPETR (116 aa). The residue at position 175 (Lys175) is an N6-acetyllysine; alternate. Lys175 carries the N6-succinyllysine; alternate modification. Residue Arg187 participates in substrate binding. Lys224 carries the N6-acetyllysine; alternate modification. Lys224 carries the N6-succinyllysine; alternate modification. Residue Lys236 is modified to N6-acetyllysine. An N6-acetyllysine; alternate modification is found at Lys237. Lys237 is modified (N6-succinyllysine; alternate). Catalysis depends on Cys248, which acts as the Cysteine persulfide intermediate. Lys250 is a binding site for substrate.

Monomer. As to expression, expressed in numerous tissues.

It localises to the mitochondrion matrix. The enzyme catalyses thiosulfate + hydrogen cyanide = thiocyanate + sulfite + 2 H(+). In terms of biological role, together with MRPL18, acts as a mitochondrial import factor for the cytosolic 5S rRNA. Only the nascent unfolded cytoplasmic form is able to bind to the 5S rRNA. Involved in the formation of iron-sulfur complexes, cyanide detoxification or modification of sulfur-containing enzymes. Other thiol compounds, besides cyanide, can act as sulfur ion acceptors. Also has weak mercaptopyruvate sulfurtransferase (MST) activity. In Rattus norvegicus (Rat), this protein is Thiosulfate sulfurtransferase (Tst).